Consider the following 354-residue polypeptide: 5,10-methenyltetrahydromethanopterin hydrogenase (354 aa).

Belongs to the HMD family.

The enzyme catalyses 5,10-methenyl-5,6,7,8-tetrahydromethanopterin + H2 = 5,10-methylenetetrahydromethanopterin + H(+). Its pathway is one-carbon metabolism; methanogenesis from CO(2); 5,10-methylene-5,6,7,8-tetrahydromethanopterin from 5,10-methenyl-5,6,7,8-tetrahydromethanopterin (hydrogen route): step 1/1. Functionally, catalyzes the reversible reduction of methenyl-H(4)MPT(+) to methylene-H(4)MPT. This is 5,10-methenyltetrahydromethanopterin hydrogenase from Methanococcus maripaludis (strain C5 / ATCC BAA-1333).